We begin with the raw amino-acid sequence, 65 residues long: Large ribosomal subunit protein bL31 (65 aa).

C16, C18, C36, and C39 together coordinate Zn(2+).

It belongs to the bacterial ribosomal protein bL31 family. Type A subfamily. As to quaternary structure, part of the 50S ribosomal subunit. Zn(2+) serves as cofactor.

Its function is as follows. Binds the 23S rRNA. This is Large ribosomal subunit protein bL31 from Geotalea daltonii (strain DSM 22248 / JCM 15807 / FRC-32) (Geobacter daltonii).